Here is a 344-residue protein sequence, read N- to C-terminus: Methionine import ATP-binding protein MetN (344 aa).

Residues 2–241 (IELQGLSQRF…PQHDVTRAMI (240 aa)) form the ABC transporter domain. 38 to 45 (GRSGAGKS) is an ATP binding site.

It belongs to the ABC transporter superfamily. Methionine importer (TC 3.A.1.24) family. As to quaternary structure, the complex is composed of two ATP-binding proteins (MetN), two transmembrane proteins (MetI) and a solute-binding protein (MetQ).

The protein localises to the cell inner membrane. It catalyses the reaction L-methionine(out) + ATP + H2O = L-methionine(in) + ADP + phosphate + H(+). The enzyme catalyses D-methionine(out) + ATP + H2O = D-methionine(in) + ADP + phosphate + H(+). Part of the ABC transporter complex MetNIQ involved in methionine import. Responsible for energy coupling to the transport system. This Cupriavidus necator (strain ATCC 17699 / DSM 428 / KCTC 22496 / NCIMB 10442 / H16 / Stanier 337) (Ralstonia eutropha) protein is Methionine import ATP-binding protein MetN.